A 328-amino-acid chain; its full sequence is DNA polymerase IV (328 aa).

In terms of domain architecture, UmuC spans 6-187 (IIHIDMDYFF…LDIGDFPGVG (182 aa)). Mg(2+)-binding residues include Asp10 and Asp105. Residue Glu106 is part of the active site.

It belongs to the DNA polymerase type-Y family. In terms of assembly, monomer. Mg(2+) is required as a cofactor.

Its subcellular location is the cytoplasm. It carries out the reaction DNA(n) + a 2'-deoxyribonucleoside 5'-triphosphate = DNA(n+1) + diphosphate. Poorly processive, error-prone DNA polymerase involved in untargeted mutagenesis. Copies undamaged DNA at stalled replication forks, which arise in vivo from mismatched or misaligned primer ends. These misaligned primers can be extended by PolIV. Exhibits no 3'-5' exonuclease (proofreading) activity. May be involved in translesional synthesis, in conjunction with the beta clamp from PolIII. The polypeptide is DNA polymerase IV (Staphylococcus aureus (strain bovine RF122 / ET3-1)).